A 361-amino-acid chain; its full sequence is Outer membrane protein P2 (361 aa).

A signal peptide spans 1–20 (MKKTLAALIVGAFAASAANA).

It belongs to the Gram-negative porin family. In terms of assembly, homotrimer.

It is found in the cell outer membrane. In terms of biological role, forms pores that allow passive diffusion of small molecules across the outer membrane. This is Outer membrane protein P2 (ompP2) from Haemophilus influenzae.